Here is a 309-residue protein sequence, read N- to C-terminus: tRNA pseudouridine synthase B (309 aa).

Residue D39 is the Nucleophile of the active site. One can recognise a PUA domain in the interval 229-306 (LPRVVVHQES…ERVLTLRKVF (78 aa)).

This sequence belongs to the pseudouridine synthase TruB family. Type 1 subfamily.

The enzyme catalyses uridine(55) in tRNA = pseudouridine(55) in tRNA. Functionally, responsible for synthesis of pseudouridine from uracil-55 in the psi GC loop of transfer RNAs. In Thermotoga petrophila (strain ATCC BAA-488 / DSM 13995 / JCM 10881 / RKU-1), this protein is tRNA pseudouridine synthase B.